The following is a 397-amino-acid chain: DnaJ homolog subfamily A member 4 (397 aa).

Residues 4 to 70 (ETQYYDILGV…RDIYDQGGEQ (67 aa)) form the J domain. A Phosphoserine modification is found at Ser-18. The CR-type zinc finger occupies 122-206 (GITKKLALQK…CSGAKVTREK (85 aa)). Cys-135, Cys-138, Cys-151, Cys-154, Cys-178, Cys-181, Cys-194, and Cys-197 together coordinate Zn(2+). CXXCXGXG motif repeat units follow at residues 135–142 (CEKCEGIG), 151–158 (CPLCKGRG), 178–185 (CIECKGQG), and 194–201 (CENCSGAK). Residues 366 to 380 (EFNPNEQSWRQHREA) show a composition bias toward basic and acidic residues. Residues 366–397 (EFNPNEQSWRQHREAYEEDDEEPRAGVQCQTA) are disordered. Cys-394 is subject to Cysteine methyl ester. The S-farnesyl cysteine moiety is linked to residue Cys-394. Residues 395–397 (QTA) constitute a propeptide, removed in mature form.

As to expression, specifically expressed in testis and heart.

The protein localises to the membrane. In Mus musculus (Mouse), this protein is DnaJ homolog subfamily A member 4 (Dnaja4).